Here is a 266-residue protein sequence, read N- to C-terminus: MKAVVLTLAVLFLTGSQARHFWQQDEPQSPWDRVKDLATVYVDVVKDGGRDYVAQFEASALGKQLNLKLLDNWDTLSSTVAKLREQIGPVTQEFWDNLEKETEVLRQEMNKDLEEVKKKVQPYLDEFQSKWHEEVELYRQKVAPLGAELSEGARQKLQELQEKLSPLGEELRDRARTHVDALRAQLAPYSDQLRERLATRLQALKEGGGAALAEYHAKASEQLSVLREKAKPALEDLRQGLLPVLESFRTSLLAAVDEATKKLNAQ.

The first 18 residues, 1 to 18 (MKAVVLTLAVLFLTGSQA), serve as a signal peptide directing secretion. A run of 2 repeats spans residues 67 to 88 (LKLL…EQIG) and 89 to 110 (PVTQ…QEMN). Residues 67 to 266 (LKLLDNWDTL…DEATKKLNAQ (200 aa)) form a 10 X approximate tandem repeats region. A Methionine sulfoxide modification is found at methionine 109. Residues 111 to 121 (KDLEEVKKKVQ) form a 3; half-length repeat. Repeat copies occupy residues 122–143 (PYLD…QKVA), 144–165 (PLGA…EKLS), 166–187 (PLGE…AQLA), 188–209 (PYSD…EGGG), and 210–231 (AALA…EKAK). Residues 232–242 (PALEDLRQGLL) form a 9; half-length repeat. Residues 243-266 (PVLESFRTSLLAAVDEATKKLNAQ) form repeat 10.

The protein belongs to the apolipoprotein A1/A4/E family. As to quaternary structure, homodimer. Interacts with APOA1BP and CLU. Component of a sperm activating protein complex (SPAP), consisting of APOA1, an immunoglobulin heavy chain, an immunoglobulin light chain and albumin. Interacts with NDRG1. Interacts with SCGB3A2. Interacts with NAXE and YJEFN3. Glycosylated. Post-translationally, palmitoylated. In terms of processing, phosphorylation sites are present in the extracellular medium.

The protein localises to the secreted. Its function is as follows. Participates in the reverse transport of cholesterol from tissues to the liver for excretion by promoting cholesterol efflux from tissues and by acting as a cofactor for the lecithin cholesterol acyltransferase (LCAT). As part of the SPAP complex, activates spermatozoa motility. This chain is Apolipoprotein A-I (APOA1), found in Odobenus rosmarus divergens (Pacific walrus).